The following is a 412-amino-acid chain: Autophagy-related protein 18 (412 aa).

WD repeat units lie at residues 100-139 (RFNK…NIMD), 142-183 (TNKL…SVST), and 186-226 (AHEG…RLFE). The L/FRRG motif signature appears at 227–230 (FRRG). A WD 4 repeat occupies 232 to 271 (TRCVNIYSLCFSSDSKYLTSSSNTETVHVFKLEKTEGVDN). Positions 363-412 (HNIGPKSDTSRASPTSTGSGGAAKSAEASNQSVPNMDDPDDFPPMSHTSG) are disordered. Residues 372–391 (SRASPTSTGSGGAAKSAEAS) are compositionally biased toward low complexity.

It belongs to the WD repeat PROPPIN family. In terms of tissue distribution, expressed in neurons and intestinal cells.

Its subcellular location is the cytoplasmic vesicle. The protein resides in the phagosome membrane. It localises to the cytoplasm. In terms of biological role, component of the autophagy machinery that is recruited to phosphatidylinositols on preautophagosomal structures, which are early autophagic structures, to promote autophagosome formation, and the subsequent degradation and clearance of engulfed apoptotic cells and P-granules in somatic cells. In particular, binds with high affinity to phosphatidylinositols including phosphatidylinositol 3-phosphate (PtdIns(3)P), phosphatidylinositol 4-phosphate (PtdIns(4)P), and phosphatidylinositol 5-phosphate (PtdIns(5)P), and more weakly to phosphatidylinositol 3,5-bisphosphate (PtdIns(3,5)P2). Plays a role in mitophagy, which is the autophagic consumption of mitochondria, in response to dietary restriction. Involved in xenophagy, the autophagy-mediated degradation of pathogens and pathogen products, such as toxins. Also plays a role in membrane-pore repair. In a daf-18/PTEN- and daf-16/FOXO-dependent manner, required for the proliferation of germ stem cell progenitors in the gonad during the late phases of larval development. By regulating the release of neurotransmitters and neuropeptides, involved in the control of lifespan in response to dietary restriction and daf-2 signaling. Probably through its involvement in autophagy, required for dauer formation. This Caenorhabditis elegans protein is Autophagy-related protein 18.